A 177-amino-acid chain; its full sequence is Translation initiation factor IF-3 (177 aa).

It belongs to the IF-3 family. Monomer.

The protein resides in the cytoplasm. Functionally, IF-3 binds to the 30S ribosomal subunit and shifts the equilibrium between 70S ribosomes and their 50S and 30S subunits in favor of the free subunits, thus enhancing the availability of 30S subunits on which protein synthesis initiation begins. In Nitratiruptor sp. (strain SB155-2), this protein is Translation initiation factor IF-3.